Consider the following 1317-residue polypeptide: DNA-directed RNA polymerase subunit beta' (1317 aa).

4 residues coordinate Zn(2+): C60, C62, C75, and C78. A disordered region spans residues 183–209 (ELEDEGAKSDVKRKVRDGGEREMRQLR). 3 residues coordinate Mg(2+): D535, D537, and D539. Zn(2+) is bound by residues C890, C967, C974, and C977.

Belongs to the RNA polymerase beta' chain family. In terms of assembly, the RNAP catalytic core consists of 2 alpha, 1 beta, 1 beta' and 1 omega subunit. When a sigma factor is associated with the core the holoenzyme is formed, which can initiate transcription. Mg(2+) is required as a cofactor. The cofactor is Zn(2+).

The enzyme catalyses RNA(n) + a ribonucleoside 5'-triphosphate = RNA(n+1) + diphosphate. Its function is as follows. DNA-dependent RNA polymerase catalyzes the transcription of DNA into RNA using the four ribonucleoside triphosphates as substrates. The sequence is that of DNA-directed RNA polymerase subunit beta' from Mycolicibacterium vanbaalenii (strain DSM 7251 / JCM 13017 / BCRC 16820 / KCTC 9966 / NRRL B-24157 / PYR-1) (Mycobacterium vanbaalenii).